Reading from the N-terminus, the 229-residue chain is Non-structural protein P8 (229 aa).

The tract at residues Met-14 to Leu-26 is CCM-I. The interval Ile-94–Lys-116 is CCM-III. A run of 2 helical transmembrane segments spans residues Ile-119 to Leu-139 and Ser-162 to Ala-182. Residues Glu-185–Glu-198 form a CCM-II region.

Belongs to the orbivirus NS3 family. In terms of assembly, forms homooligomers via coiled-coil motif. Interacts with host OPTN; this interaction inhibits innate immune response.

Its subcellular location is the host cell membrane. It is found in the host Golgi apparatus. Its function is as follows. Plays a role in the inhibition of host innate immune response. Interacts with host OPTN and thus inhibits the recruitment of TBK1 to the host Golgi apparatus. In turn, downstream partner IRF3 cannot be activated and IFN-beta production is impaired. Facilitates viral particle release either by increasing plasma membrane permeability through a viroporin-like activity or by viral budding. This Bluetongue virus 10 (isolate USA) (BTV 10) protein is Non-structural protein P8 (Segment-10).